Here is a 296-residue protein sequence, read N- to C-terminus: MVRPHLPLNALRAFEASARHLSFTRAAIELCVTQAAVSHQVKSLEERLGVALFKRLPRGLMLTHEGESLLPVLCDSFDRIAGLLERFEGGHYRDVLTVGAVGTFTVGWLLPRLEDFQARHPFIDLRLSTHNNRVDIAAEGLDYAIRFGGGAWHGTEALALFEAPLTVLCCPEVAAQLHSPADLLQHTLLRSYRADEWPLWFQAAGLPAHAPLTRSIVFDTSLAMLEAARQGVGVALAPAAMFARQLASESIRRPFATEVSTGSYWLTRLQSRGETSAMLAFRGWLLEMAAVEARGR.

The region spanning 6 to 63 (LPLNALRAFEASARHLSFTRAAIELCVTQAAVSHQVKSLEERLGVALFKRLPRGLMLT) is the HTH lysR-type domain. The H-T-H motif DNA-binding region spans 23–42 (FTRAAIELCVTQAAVSHQVK). The includes the LysR substrate-binding / effector-binding domain, involved in binding to specific cell-wall-derived muropeptide products, some of which have signaling functions, leading to disparate responses such as antibiotic resistance, virulence, and host cell inflammation stretch occupies residues 83-296 (LLERFEGGHY…EMAAVEARGR (214 aa)). Residues 91–289 (HYRDVLTVGA…AFRGWLLEMA (199 aa)) form the LysR substrate-binding domain.

This sequence belongs to the LysR transcriptional regulatory family. In terms of assembly, homodimer.

The protein resides in the cytoplasm. It localises to the membrane. In terms of biological role, transcription regulator that plays a critical role in the expression of beta-lactamase AmpC, acting by positive regulation of the ampC gene. Has a wider role in the regulation of expression of genes involved in proteolysis, quorum sensing, and virulence. Acts by binding directly to the promoter region of the ampC gene. Probably does not regulate transcription of its own gene. This Pseudomonas aeruginosa (strain ATCC 15692 / DSM 22644 / CIP 104116 / JCM 14847 / LMG 12228 / 1C / PRS 101 / PAO1) protein is HTH-type transcriptional activator AmpR (ampR).